The primary structure comprises 249 residues: UPF0758 protein Oant_1909 (249 aa).

Positions valine 127–isoleucine 249 constitute an MPN domain. 3 residues coordinate Zn(2+): histidine 198, histidine 200, and aspartate 211. Positions histidine 198 to aspartate 211 match the JAMM motif motif.

The protein belongs to the UPF0758 family.

The protein is UPF0758 protein Oant_1909 of Brucella anthropi (strain ATCC 49188 / DSM 6882 / CCUG 24695 / JCM 21032 / LMG 3331 / NBRC 15819 / NCTC 12168 / Alc 37) (Ochrobactrum anthropi).